The following is a 23-amino-acid chain: Brevinin-1SE (23 aa).

A disulfide bridge links C17 with C23.

Expressed by the skin glands.

It is found in the secreted. Its function is as follows. Mast cell degranulating peptide. Causes histamine release from rat peritoneal mast cells in vitro. Has antibacterial activity against the Gram-negative bacterium E.coli K12 and Gram-positive bacterium M.luteus NCT C2665. This chain is Brevinin-1SE, found in Lithobates sevosus (Dusky gopher frog).